The sequence spans 315 residues: L-lactate dehydrogenase (315 aa).

NAD(+)-binding positions include Val-17, Asp-38, Lys-43, Tyr-69, and 83-84 (GA). Residues Gln-86, Arg-92, and 124–127 (NPVD) each bind substrate. NAD(+)-binding positions include 122-124 (ATN) and Ser-147. 152 to 155 (DTAR) provides a ligand contact to substrate. Beta-D-fructose 1,6-bisphosphate contacts are provided by Arg-157 and His-172. The Proton acceptor role is filled by His-179. Tyr-224 carries the post-translational modification Phosphotyrosine. Thr-233 serves as a coordination point for substrate.

It belongs to the LDH/MDH superfamily. LDH family. Homotetramer.

It is found in the cytoplasm. The catalysed reaction is (S)-lactate + NAD(+) = pyruvate + NADH + H(+). Its pathway is fermentation; pyruvate fermentation to lactate; (S)-lactate from pyruvate: step 1/1. Allosterically activated by fructose 1,6-bisphosphate (FBP). In terms of biological role, catalyzes the conversion of lactate to pyruvate. This Bacillus pumilus (strain SAFR-032) protein is L-lactate dehydrogenase.